The primary structure comprises 229 residues: 5'-methylthioadenosine/S-adenosylhomocysteine nucleosidase (229 aa).

Glu12 serves as the catalytic Proton acceptor. Substrate is bound by residues Gly78, Ile152, and 173–174 (ME). The Proton donor role is filled by Asp197.

This sequence belongs to the PNP/UDP phosphorylase family. MtnN subfamily.

It carries out the reaction S-adenosyl-L-homocysteine + H2O = S-(5-deoxy-D-ribos-5-yl)-L-homocysteine + adenine. The catalysed reaction is S-methyl-5'-thioadenosine + H2O = 5-(methylsulfanyl)-D-ribose + adenine. It catalyses the reaction 5'-deoxyadenosine + H2O = 5-deoxy-D-ribose + adenine. It participates in amino-acid biosynthesis; L-methionine biosynthesis via salvage pathway; S-methyl-5-thio-alpha-D-ribose 1-phosphate from S-methyl-5'-thioadenosine (hydrolase route): step 1/2. Functionally, catalyzes the irreversible cleavage of the glycosidic bond in both 5'-methylthioadenosine (MTA) and S-adenosylhomocysteine (SAH/AdoHcy) to adenine and the corresponding thioribose, 5'-methylthioribose and S-ribosylhomocysteine, respectively. Also cleaves 5'-deoxyadenosine, a toxic by-product of radical S-adenosylmethionine (SAM) enzymes, into 5-deoxyribose and adenine. The protein is 5'-methylthioadenosine/S-adenosylhomocysteine nucleosidase of Mannheimia succiniciproducens (strain KCTC 0769BP / MBEL55E).